The following is a 312-amino-acid chain: Tyrosine recombinase XerC (312 aa).

The Core-binding (CB) domain occupies 1 to 103 (MIASIYSFLD…SIKSFAHYCV (103 aa)). The Tyr recombinase domain occupies 124–306 (ELPSPMTYAQ…SVKLKKQTHQ (183 aa)). Catalysis depends on residues arginine 164, lysine 188, histidine 258, arginine 261, and histidine 284. Residue tyrosine 293 is the O-(3'-phospho-DNA)-tyrosine intermediate of the active site.

The protein belongs to the 'phage' integrase family. XerC subfamily. As to quaternary structure, forms a cyclic heterotetrameric complex composed of two molecules of XerC and two molecules of XerD.

The protein localises to the cytoplasm. In terms of biological role, site-specific tyrosine recombinase, which acts by catalyzing the cutting and rejoining of the recombining DNA molecules. The XerC-XerD complex is essential to convert dimers of the bacterial chromosome into monomers to permit their segregation at cell division. It also contributes to the segregational stability of plasmids. The polypeptide is Tyrosine recombinase XerC (Chlamydia pneumoniae (Chlamydophila pneumoniae)).